Consider the following 348-residue polypeptide: MSKTAVKDSATEKTKLSESEQHYFNSYDHYGIHEEMLQDTVRTLSYRNAIIQNKDLFKDKIVLDVGCGTGILSMFAAKHGAKHVIGVDMSSIIEMAKELVELNGFSDKITLLRGKLEDVHLPFPKVDIIISEWMGYFLLYESMMDTVLYARDHYLVEGGLIFPDKCSIHLAGLEDSQYKDEKLNYWQDVYGFDYSPFVPLVLHEPIVDTVERNNVNTTSDKLIEFDLNTVKISDLAFKSNFKLTAKRQDMINGIVTWFDIVFPAPKGKRPVEFSTGPHAPYTHWKQTIFYFPDDLDAETGDTIEGELVCSPNEKNNRDLNIKISYKFESNGIDGNSRSRKNEGSYLMH.

Residues 20–322 form the SAM-dependent MTase PRMT-type domain; sequence EQHYFNSYDH…EKNNRDLNIK (303 aa). 5 residues coordinate S-adenosyl-L-methionine: H33, R42, G66, D88, and E117. Active-site residues include E132 and E141.

It belongs to the class I-like SAM-binding methyltransferase superfamily. Protein arginine N-methyltransferase family. As to quaternary structure, homodimer. The dimers can then associate to form a ring-shaped homohexamer. Interacts with NPL3, BRE5, MTR4, SNF2, SUM1, and SSD1.

It localises to the nucleus. It catalyses the reaction L-arginyl-[protein] + S-adenosyl-L-methionine = N(omega)-methyl-L-arginyl-[protein] + S-adenosyl-L-homocysteine + H(+). The enzyme catalyses L-arginyl-[protein] + 2 S-adenosyl-L-methionine = N(omega),N(omega)-dimethyl-L-arginyl-[protein] + 2 S-adenosyl-L-homocysteine + 2 H(+). In terms of biological role, S-adenosyl-L-methionine-dependent protein-arginine N-methyltransferase that catalyzes both the mono- and asymmetric (type I) dimethylation of the guanidino nitrogens of arginine residues in a variety of RNA-binding proteins such as heterogeneous nuclear ribonucleoproteins (hnRNPs) and small nuclear ribonucleoproteins (snRNPs). Methylates NAB2, NPL3, HRP1 and YRA1, shuttling hnRNPs involved in mRNA processing and export, facilitating their export out of the nucleus. Methylation of NPL3 weakens its interaction with THO2, a component of the TREX (transcription/export) complex important for transcriptional elongation and recruitment of mRNA export factors. Methylates the hnRNP HRB1, but does not influence its subcellular location. Methylates the nucleolar proteins GAR1, NOP1 and NSR1. Methylates the snRNP SNP1 and modulates the cotranscriptional recruitment of splicing factors. Dimethylates free histone H4 (HHF1/HHF2) at 'Arg-4' (H4R3me2a) and plays a role in preservation and establishment of silent chromatin domains. Mono- and dimethylates ribosomal protein S2 (RPS2) at 'Arg-11'. Methylates the catalytic subunit of the SWI/SNF chromatin-remodeling complex SNF2. The polypeptide is Protein arginine N-methyltransferase 1 (Saccharomyces cerevisiae (strain ATCC 204508 / S288c) (Baker's yeast)).